The primary structure comprises 105 residues: Small ribosomal subunit protein uS10 (105 aa).

The protein belongs to the universal ribosomal protein uS10 family. In terms of assembly, part of the 30S ribosomal subunit.

Involved in the binding of tRNA to the ribosomes. This Arthrospira platensis (Spirulina platensis) protein is Small ribosomal subunit protein uS10.